Consider the following 254-residue polypeptide: MAYSKIRQPKLSDVIEQQLEFLILEGTLRPGEKLPPERELAKQFDVSRPSLREAIQRLEAKGLLLRRQGGGTFVQSSLWQSFSDPLVELLSDHPESQFDLLETRHALEGIAAYYAALRSTDEDKDRIRELHHAIELAQESGDLDAESEAVLQYQIAVTEAAHNVVLLHLLRCMEPMLAQNVRQNFELLYARREMLPLVSTHRTRIFEAIMAGKPEEAREASHRHLAFIEEIMLDRSREESRRERALRRLEQRKN.

The region spanning P9–S77 is the HTH gntR-type domain. A DNA-binding region (H-T-H motif) is located at residues E37–Q56.

Its function is as follows. Transcriptional repressor for the pyruvate dehydrogenase complex genes aceEF and lpd. This chain is Pyruvate dehydrogenase complex repressor (pdhR), found in Salmonella typhi.